The chain runs to 202 residues: Zinc metalloproteinase barnettlysin-1 (202 aa).

The Peptidase M12B domain occupies 6-200 (RYVELFIVVD…MKENPQCILN (195 aa)). Ca(2+) contacts are provided by E9 and D93. 3 cysteine pairs are disulfide-bonded: C117/C197, C157/C181, and C159/C164. A Zn(2+)-binding site is contributed by H142. The active site involves E143. Zn(2+) is bound by residues H146 and H152. 2 residues coordinate Ca(2+): C197 and N200.

In terms of assembly, monomer. Requires Zn(2+) as cofactor. In terms of tissue distribution, expressed by the venom gland.

Its subcellular location is the secreted. Non-hemorrhagic metalloproteinase that hydrolyzes the alpha chains of fibrinogen and fibrin but has no activity on beta- and gamma-chains. Cleaves X-Leu bonds. Inhibits platelet aggregation induced by the von Willebrand factor (VWF) (IC(50) is 1.4 uM) and type I collagen (IC(50) is 3.2 uM). Acts by cleaving the vWF and its receptor GPIb, and by cleaving the collagen-binding Alpha-2A domain of the collagen receptor alpha-2/beta-1 integrin (ITGA2/ITGB1). Also degrades the extracellular matrix protein fibronectin (FN1), but has no effect on laminin and type I collagen. The protein is Zinc metalloproteinase barnettlysin-1 of Bothrops barnetti (Barnett's lancehead).